The primary structure comprises 497 residues: Glycerol kinase (497 aa).

Position 12 (T12) interacts with ADP. ATP-binding residues include T12, T13, and S14. T12 provides a ligand contact to sn-glycerol 3-phosphate. An ADP-binding site is contributed by R16. Residues R82, E83, Y134, and D243 each coordinate sn-glycerol 3-phosphate. R82, E83, Y134, D243, and Q244 together coordinate glycerol. Residues T265 and G308 each contribute to the ADP site. Residues T265, G308, Q312, and G411 each coordinate ATP. G411 provides a ligand contact to ADP.

This sequence belongs to the FGGY kinase family.

The catalysed reaction is glycerol + ATP = sn-glycerol 3-phosphate + ADP + H(+). Its pathway is polyol metabolism; glycerol degradation via glycerol kinase pathway; sn-glycerol 3-phosphate from glycerol: step 1/1. With respect to regulation, inhibited by fructose 1,6-bisphosphate (FBP). Key enzyme in the regulation of glycerol uptake and metabolism. Catalyzes the phosphorylation of glycerol to yield sn-glycerol 3-phosphate. The chain is Glycerol kinase from Allorhizobium ampelinum (strain ATCC BAA-846 / DSM 112012 / S4) (Agrobacterium vitis (strain S4)).